Here is a 161-residue protein sequence, read N- to C-terminus: Disulfide bond formation protein B (161 aa).

The Cytoplasmic portion of the chain corresponds to 1 to 8; the sequence is MQANSRTY. A helical transmembrane segment spans residues 9–25; sequence FLLIAIVSFAMVGAALY. Topologically, residues 26–43 are periplasmic; it reads MQYAENLQPCPLCIMQRF. Cysteine 35 and cysteine 38 are oxidised to a cystine. The helical transmembrane segment at 44–58 threads the bilayer; the sequence is AFIGIGIFSLLAVIA. At 59-63 the chain is on the cytoplasmic side; the sequence is QNTRT. Residues 64–81 form a helical membrane-spanning segment; the sequence is LWQGLGMLSGVGGIAVAG. At 82–136 the chain is on the periplasmic side; that stretch reads YQVALLMNPKASCGIDPLENWVNSLPTAKLLPQVFYSDGLCTAPTPPILGLSIPA. Cysteines 94 and 122 form a disulfide. Residues 137–155 traverse the membrane as a helical segment; sequence WSLIWLLILTLTLAVGLIR. Residues 156–161 are Cytoplasmic-facing; it reads REKHFR.

The protein belongs to the DsbB family.

Its subcellular location is the cell inner membrane. Its function is as follows. Required for disulfide bond formation in some periplasmic proteins. Acts by oxidizing the DsbA protein. This is Disulfide bond formation protein B from Cupriavidus metallidurans (strain ATCC 43123 / DSM 2839 / NBRC 102507 / CH34) (Ralstonia metallidurans).